The primary structure comprises 419 residues: Carboxypeptidase A1 (419 aa).

The N-terminal stretch at 1-16 (MKRLLVLSVLLAAVFG) is a signal peptide. The propeptide at 17-110 (NENFVGHQVL…KQQMSAFQAR (94 aa)) is activation peptide. A Peptidase M14 domain is found at 121–414 (TYHTLDEIYE…LALLTIMDHT (294 aa)). Zn(2+) is bound by residues H179 and E182. Substrate-binding positions include 179–182 (HSRE), R237, and 254–255 (NR). C248 and C271 are oxidised to a cystine. Residue H306 coordinates Zn(2+). Residues 307 to 308 (SY) and Y358 contribute to the substrate site. The Proton donor/acceptor role is filled by E380.

It belongs to the peptidase M14 family. Monomer. Requires Zn(2+) as cofactor.

The protein localises to the secreted. It catalyses the reaction Release of a C-terminal amino acid, but little or no action with -Asp, -Glu, -Arg, -Lys or -Pro.. Carboxypeptidase that catalyzes the release of a C-terminal amino acid, but has little or no action with -Asp, -Glu, -Arg, -Lys or -Pro. This chain is Carboxypeptidase A1 (Cpa1), found in Mus musculus (Mouse).